A 488-amino-acid chain; its full sequence is Prostaglandin E2 receptor EP4 subtype (488 aa).

Residues 1–19 lie on the Extracellular side of the membrane; the sequence is MSTPVANASASSMPELLNN. N-linked (GlcNAc...) asparagine glycosylation occurs at asparagine 7. Residues 20–43 form a helical membrane-spanning segment; it reads PVTIPAVMFIFGVVGNLVAIVVLC. Topologically, residues 44-55 are cytoplasmic; that stretch reads KSRKEQKETTFY. A helical transmembrane segment spans residues 56–79; sequence TLVCGLAVTDLLGTLLVSPVTIAT. Over 80 to 96 the chain is Extracellular; sequence YMKGQWPGGQALCDYST. A disulfide bridge connects residues cysteine 92 and cysteine 170. A helical transmembrane segment spans residues 97 to 115; that stretch reads FILLFFGLSGLSIICAMSI. Topologically, residues 116–135 are cytoplasmic; the sequence is ERYLAINHAYFYSHYVDKRL. A helical membrane pass occupies residues 136 to 160; that stretch reads AGLTLFAVYASNVLFCALPNMGLGR. Residues 161 to 184 are Extracellular-facing; sequence SRLQFPDTWCFIDWRTNVTAHAAF. Residue asparagine 177 is glycosylated (N-linked (GlcNAc...) asparagine). The helical transmembrane segment at 185–211 threads the bilayer; sequence SYMYAGFSSFLILATVLCNVLVCGALL. Residues 212 to 270 lie on the Cytoplasmic side of the membrane; the sequence is RMHRQFMRRTSLGTEQHHAAAAAAVTSAACRGHPTASPALPRLSDFRRRRSFRRIAGAE. The chain crosses the membrane as a helical span at residues 271 to 298; it reads IQMVILLIATSLVVLICSIPLVVRVFIN. Over 299–315 the chain is Extracellular; sequence QLYQPDLVREISQNPDL. The helical transmembrane segment at 316–335 threads the bilayer; it reads QAIRIASVNPILDPWIYILL. Topologically, residues 336 to 488 are cytoplasmic; it reads RKTVLSKAIE…ETLNLSEKCI (153 aa). The span at 358 to 371 shows a compositional bias: basic and acidic residues; the sequence is RRDRSGQHCSDSRR. The interval 358–381 is disordered; it reads RRDRSGQHCSDSRRTSSAMSTHSR. Over residues 372–381 the composition is skewed to polar residues; it reads TSSAMSTHSR. Phosphoserine is present on residues serine 377, serine 380, serine 382, and serine 385. The tract at residues 456–475 is disordered; that stretch reads EVGGGGRAGPTPKGSSLQVT.

The protein belongs to the G-protein coupled receptor 1 family. Interacts with FEM1A. Phosphorylation mediates agonist-mediated desensitization by promoting cytoplasmic retention. Highly expressed in intestine, duodenal epithelium, uterus, thymus and adrenal cortex. Lower but significant expression in whole adrenal, lung, spleen, stomach, and kidney. In this latter organ, the receptor is localized in the glomeruli and the transitional epithelium of the renal calyx.

It is found in the cell membrane. Its function is as follows. Receptor for prostaglandin E2 (PGE2). The activity of this receptor is mediated by G(s) proteins that stimulate adenylate cyclase. Has a relaxing effect on smooth muscle. May play an important role in regulating renal hemodynamics, intestinal epithelial transport, adrenal aldosterone secretion, and uterine function. In Oryctolagus cuniculus (Rabbit), this protein is Prostaglandin E2 receptor EP4 subtype (PTGER4).